Reading from the N-terminus, the 352-residue chain is NAD(+)-dependent homoserine dehydrogenase (352 aa).

It belongs to the homoserine dehydrogenase family.

The enzyme catalyses L-homoserine + NAD(+) = L-aspartate 4-semialdehyde + NADH + H(+). In terms of biological role, dehydrogenase involved in the degradation of canavanine, the delta-oxa-analog of arginine, allowing growth on canavanine as sole nitrogen and carbon source. Catalyzes the conversion of homoserine and NAD(+) to aspartate-semialdehyde and NADH. Is highly specific for NAD(+) and cannot use NADP(+). The chain is NAD(+)-dependent homoserine dehydrogenase from Pseudomonas canavaninivorans.